A 596-amino-acid polypeptide reads, in one-letter code: MTDLTAQDAAWSTRDHLDDPVIGELRNRFGPDAFTVQATRTGIPVVWVKREQLLEVGDFLKKLPKPYVMLFDLHGMDERLRTHRDGLPAADFSVFYHLISIERNRDIMLKVALSENDLRVPTFTKLFPNANWYERETWEMFGIDIEGHPHLTRIMMPQTWEGHPLRKDYPARATEFDPFELTKAKQDLEMEALTFKPEDWGMKRGTDNEDFMFLNLGPNHPSAHGAFRIILQLDGEEIVDCVPDIGYHHRGAEKMGERQSWHSYIPYTDRIEYLGGCVNEMPYVLAVEKLAGITVPDRVNVIRVMLSELFRINSHLLYISTFIQDVGAMTPVFFAFTDRQKIYDLVEAITGFRMHPAWFRIGGVAHDLPRGWDRLLREFLEWMPKRLDSYEKAALRNTILKGRSQGVAAYGAKEALEWGTTGAGLRATGIDFDVRKWRPYSGYENFDFEVPVGGGVSDCYTRVMLKVEELRQSLRILQQCLDNMPEGPFKADHPLTTPPPKERTLQHIETLITHFLQVSWGPVMPAQESFQMVEATKGINSYYLTSDGSTMSYRTRVRTPSFAHLQQIPSAIRGSLVSDLIVYLGSIDFVMSDVDR.

Residues M1–Q186 are NADH dehydrogenase I subunit C. An NADH dehydrogenase I subunit D region spans residues D210–R596.

It in the N-terminal section; belongs to the complex I 30 kDa subunit family. This sequence in the C-terminal section; belongs to the complex I 49 kDa subunit family. In terms of assembly, NDH-1 is composed of 13 different subunits. Subunits NuoB, CD, E, F, and G constitute the peripheral sector of the complex.

It is found in the cell inner membrane. It catalyses the reaction a quinone + NADH + 5 H(+)(in) = a quinol + NAD(+) + 4 H(+)(out). In terms of biological role, NDH-1 shuttles electrons from NADH, via FMN and iron-sulfur (Fe-S) centers, to quinones in the respiratory chain. The immediate electron acceptor for the enzyme in this species is believed to be ubiquinone. Couples the redox reaction to proton translocation (for every two electrons transferred, four hydrogen ions are translocated across the cytoplasmic membrane), and thus conserves the redox energy in a proton gradient. The protein is NADH-quinone oxidoreductase subunit C/D of Salmonella dublin (strain CT_02021853).